Reading from the N-terminus, the 1136-residue chain is Protein stu-1 (1136 aa).

HEAT repeat units follow at residues 95–133 (TLPV…ERSV) and 167–205 (YVPT…KSDL). 3 disordered regions span residues 524–554 (KDPH…MGAP), 567–794 (RAMA…QPQI), and 821–884 (TAGQ…LLDS). Residues 595-622 (VSSTSQASVASASTASAVPAPTKSAFGA) show a composition bias toward low complexity. Over residues 659 to 668 (PAEPASPPSK) the composition is skewed to pro residues. The span at 673-683 (TVTSPKTQTLV) shows a compositional bias: polar residues. The segment covering 701-716 (SSESGIPIPVSGISSP) has biased composition (low complexity). 2 stretches are compositionally biased toward polar residues: residues 777-793 (LPTQ…QQPQ) and 822-833 (AGQTQPQSTYTS).

This sequence belongs to the CLASP family. Interacts with microtubules.

It is found in the nucleus. The protein resides in the cytoplasm. It localises to the cytoskeleton. The protein localises to the spindle. Microtubule binding protein that promotes the stabilization of dynamic microtubules. Required for mitotic spindle formation. This chain is Protein stu-1 (stu-1), found in Neurospora crassa (strain ATCC 24698 / 74-OR23-1A / CBS 708.71 / DSM 1257 / FGSC 987).